Reading from the N-terminus, the 413-residue chain is Alpha-ketoglutarate-dependent xanthine dioxygenase xan1 (413 aa).

Residues M1 to T18 are compositionally biased toward low complexity. The tract at residues M1 to P24 is disordered. Fe cation-binding residues include H183 and D185. T228 and W362 together coordinate 2-oxoglutarate. H377 serves as a coordination point for Fe cation. R389 is a binding site for 2-oxoglutarate.

This sequence belongs to the TfdA dioxygenase family. Fe(2+) is required as a cofactor.

Its subcellular location is the cytoplasm. It is found in the cytosol. The enzyme catalyses xanthine + 2-oxoglutarate + O2 = urate + succinate + CO2. Alpha-ketoglutarate-dependent xanthine dioxygenase is a non-heme mononuclear Fe(2+) enzyme that decarboxylates alpha-ketoglutarate to succinate and CO(2) while hydroxylating xanthine to generate uric acid. Allows xanthine utilization as a nitrogen source. This chain is Alpha-ketoglutarate-dependent xanthine dioxygenase xan1 (xan1), found in Schizosaccharomyces pombe (strain 972 / ATCC 24843) (Fission yeast).